The sequence spans 189 residues: MNSGVLLSESETDTSEVSGRQSELISGDESIKGKLEEFSAKLNELRLADGNSDGGDEEESLSPDTKSQREESSENSENVSRSTSRPPLTSSIVSSVEREQLKSQVKVKIRLQPIGAIPQIQPRVCQISAHQQFLALTRFLCKRLKRKHIHCYINNAFAPSLDQNIGDLWTQFKVNDELIVSYCETVAFG.

2 disordered regions span residues 1–30 and 45–92; these read MNSG…GDES and LRLA…TSSI. Residues 15–24 are compositionally biased toward polar residues; that stretch reads SEVSGRQSEL. Low complexity predominate over residues 75-91; sequence NSENVSRSTSRPPLTSS. Residue Gly-189 forms a Glycyl lysine isopeptide (Gly-Lys) (interchain with K-145 in ATG5) linkage.

Belongs to the ATG12 family. Forms a conjugate with ATG5.

It is found in the preautophagosomal structure membrane. Functionally, ubiquitin-like protein involved in cytoplasm to vacuole transport (Cvt), autophagy vesicles formation, mitophagy, and nucleophagy. Conjugation with ATG5 through a ubiquitin-like conjugating system involving also ATG7 as an E1-like activating enzyme and ATG10 as an E2-like conjugating enzyme, is essential for its function. The ATG12-ATG5 conjugate functions as an E3-like enzyme which is required for lipidation of ATG8 and ATG8 association to the vesicle membranes. The sequence is that of Ubiquitin-like protein ATG12 (ATG12) from Kluyveromyces lactis (strain ATCC 8585 / CBS 2359 / DSM 70799 / NBRC 1267 / NRRL Y-1140 / WM37) (Yeast).